A 53-amino-acid chain; its full sequence is Temporin-SHd (53 aa).

A signal peptide spans 1-10 (FLGTINLSLC). The propeptide occupies 11–34 (EQERDADEEKRDEPDESDVEVEKR). Phe-51 carries the phenylalanine amide modification.

It is found in the secreted. The protein resides in the target cell membrane. Non-amphipathic mildly cationic alpha-helical antimicrobial peptide with potent activity against Gram-positive (including methicillin-resistant Staphylococcus aureus (MRSA)) and Gram-negative bacteria, and some fungi, as well as against Trypanosoma and Leishmania (both promastigote and amastigote forms). Strongly and selectively perturbs anionic bilayer membranes by interacting with the polar head groups and acyl region of the phospholipids, with formation of regions of two coexisting phases, one phase rich in peptide and the other lipid-rich. Shows low hemolytic activity (LC(50)=44 uM) and a low toxicity for human monocytes THP-1 and THP-1-derived macrophages. Is not toxic to human hepatoma-derived cells. This Pelophylax saharicus (Sahara frog) protein is Temporin-SHd.